The primary structure comprises 28 residues: uncharacterized protein (28 aa).

This is an uncharacterized protein from Escherichia coli (Bacteriophage T4).